The primary structure comprises 322 residues: Phosphatidylserine decarboxylase proenzyme (322 aa).

Catalysis depends on charge relay system; for autoendoproteolytic cleavage activity residues Asp90, His147, and Ser254. The Schiff-base intermediate with substrate; via pyruvic acid; for decarboxylase activity role is filled by Ser254. A Pyruvic acid (Ser); by autocatalysis modification is found at Ser254. Residues Glu296–Thr322 form a disordered region. Residues Glu303–Thr322 show a composition bias toward basic and acidic residues.

Belongs to the phosphatidylserine decarboxylase family. PSD-B subfamily. Prokaryotic type I sub-subfamily. Heterodimer of a large membrane-associated beta subunit and a small pyruvoyl-containing alpha subunit. It depends on pyruvate as a cofactor. Is synthesized initially as an inactive proenzyme. Formation of the active enzyme involves a self-maturation process in which the active site pyruvoyl group is generated from an internal serine residue via an autocatalytic post-translational modification. Two non-identical subunits are generated from the proenzyme in this reaction, and the pyruvate is formed at the N-terminus of the alpha chain, which is derived from the carboxyl end of the proenzyme. The autoendoproteolytic cleavage occurs by a canonical serine protease mechanism, in which the side chain hydroxyl group of the serine supplies its oxygen atom to form the C-terminus of the beta chain, while the remainder of the serine residue undergoes an oxidative deamination to produce ammonia and the pyruvoyl prosthetic group on the alpha chain. During this reaction, the Ser that is part of the protease active site of the proenzyme becomes the pyruvoyl prosthetic group, which constitutes an essential element of the active site of the mature decarboxylase.

It localises to the cell membrane. It carries out the reaction a 1,2-diacyl-sn-glycero-3-phospho-L-serine + H(+) = a 1,2-diacyl-sn-glycero-3-phosphoethanolamine + CO2. The protein operates within phospholipid metabolism; phosphatidylethanolamine biosynthesis; phosphatidylethanolamine from CDP-diacylglycerol: step 2/2. Its function is as follows. Catalyzes the formation of phosphatidylethanolamine (PtdEtn) from phosphatidylserine (PtdSer). The chain is Phosphatidylserine decarboxylase proenzyme from Salmonella dublin (strain CT_02021853).